Consider the following 187-residue polypeptide: Peptidyl-tRNA hydrolase (187 aa).

Residue Tyr15 coordinates tRNA. His20 (proton acceptor) is an active-site residue. Residues Phe65, Asn67, and Asn113 each contribute to the tRNA site.

The protein belongs to the PTH family. In terms of assembly, monomer.

Its subcellular location is the cytoplasm. It carries out the reaction an N-acyl-L-alpha-aminoacyl-tRNA + H2O = an N-acyl-L-amino acid + a tRNA + H(+). Hydrolyzes ribosome-free peptidyl-tRNAs (with 1 or more amino acids incorporated), which drop off the ribosome during protein synthesis, or as a result of ribosome stalling. In terms of biological role, catalyzes the release of premature peptidyl moieties from peptidyl-tRNA molecules trapped in stalled 50S ribosomal subunits, and thus maintains levels of free tRNAs and 50S ribosomes. This chain is Peptidyl-tRNA hydrolase, found in Methylococcus capsulatus (strain ATCC 33009 / NCIMB 11132 / Bath).